The primary structure comprises 83 residues: Exodeoxyribonuclease 7 small subunit (83 aa).

It belongs to the XseB family. As to quaternary structure, heterooligomer composed of large and small subunits.

It is found in the cytoplasm. The catalysed reaction is Exonucleolytic cleavage in either 5'- to 3'- or 3'- to 5'-direction to yield nucleoside 5'-phosphates.. Functionally, bidirectionally degrades single-stranded DNA into large acid-insoluble oligonucleotides, which are then degraded further into small acid-soluble oligonucleotides. In Novosphingobium aromaticivorans (strain ATCC 700278 / DSM 12444 / CCUG 56034 / CIP 105152 / NBRC 16084 / F199), this protein is Exodeoxyribonuclease 7 small subunit.